A 164-amino-acid chain; its full sequence is Transcriptional regulator MraZ (164 aa).

2 SpoVT-AbrB domains span residues 7 to 60 (HFTN…EIDE) and 83 to 126 (SEIL…EPGR). Residues 141 to 164 (LRKQLSSRPVAPDAQPPRPHGARE) are disordered. A compositionally biased stretch (pro residues) spans 154-164 (AQPPRPHGARE).

This sequence belongs to the MraZ family. As to quaternary structure, forms oligomers.

The protein resides in the cytoplasm. The protein localises to the nucleoid. The polypeptide is Transcriptional regulator MraZ (Beijerinckia indica subsp. indica (strain ATCC 9039 / DSM 1715 / NCIMB 8712)).